Reading from the N-terminus, the 466-residue chain is Glutamyl-tRNA reductase (466 aa).

Residues 47 to 50, Ser107, 112 to 114, and Gln118 each bind substrate; these read TCNR and EQQ. Cys48 acts as the Nucleophile in catalysis. Residue 194–199 coordinates NADP(+); it reads GAGAMS.

The protein belongs to the glutamyl-tRNA reductase family. Homodimer.

The enzyme catalyses (S)-4-amino-5-oxopentanoate + tRNA(Glu) + NADP(+) = L-glutamyl-tRNA(Glu) + NADPH + H(+). The protein operates within porphyrin-containing compound metabolism; protoporphyrin-IX biosynthesis; 5-aminolevulinate from L-glutamyl-tRNA(Glu): step 1/2. In terms of biological role, catalyzes the NADPH-dependent reduction of glutamyl-tRNA(Glu) to glutamate 1-semialdehyde (GSA). The protein is Glutamyl-tRNA reductase of Corynebacterium efficiens (strain DSM 44549 / YS-314 / AJ 12310 / JCM 11189 / NBRC 100395).